A 133-amino-acid polypeptide reads, in one-letter code: Small ribosomal subunit protein uS8 (133 aa).

The protein belongs to the universal ribosomal protein uS8 family. As to quaternary structure, part of the 30S ribosomal subunit. Contacts proteins S5 and S12.

In terms of biological role, one of the primary rRNA binding proteins, it binds directly to 16S rRNA central domain where it helps coordinate assembly of the platform of the 30S subunit. In Rippkaea orientalis (strain PCC 8801 / RF-1) (Cyanothece sp. (strain PCC 8801)), this protein is Small ribosomal subunit protein uS8.